The sequence spans 29 residues: Dermaseptin-J6 (29 aa).

Val-29 is subject to Valine amide.

Expressed by the skin glands.

The protein resides in the secreted. In terms of biological role, has antimicrobial activity. This is Dermaseptin-J6 from Phasmahyla jandaia (Jandaia leaf frog).